A 124-amino-acid polypeptide reads, in one-letter code: Replication restart protein PriB (124 aa).

The 101-residue stretch at 12–112 folds into the SSB domain; the sequence is IDNCLTLTGI…LHTEQIEFID (101 aa).

Belongs to the PriB family. Homodimer. Interacts with PriA and DnaT. Component of the replication restart primosome. Primosome assembly occurs via a 'hand-off' mechanism. PriA binds to replication forks, subsequently PriB then DnaT bind; DnaT then displaces ssDNA to generate the helicase loading substrate.

Involved in the restart of stalled replication forks, which reloads the replicative helicase on sites other than the origin of replication; the PriA-PriB pathway is the major replication restart pathway. During primosome assembly it facilitates complex formation between PriA and DnaT on DNA; stabilizes PriA on DNA. Stimulates the DNA unwinding activity of PriA helicase. In Haemophilus ducreyi (strain 35000HP / ATCC 700724), this protein is Replication restart protein PriB.